The sequence spans 599 residues: NADH-ubiquinone oxidoreductase chain 5 (599 aa).

Transmembrane regions (helical) follow at residues 1 to 21, 28 to 48, 81 to 101, 115 to 135, 171 to 191, 193 to 213, 233 to 253, 265 to 285, 302 to 322, 323 to 343, 363 to 383, 398 to 420, 455 to 475, 481 to 501, 510 to 530, and 577 to 597; these read MLEL…IFLF, FAES…ILLM, CFFV…FYYM, GLFL…QLLI, GDIG…DWSF, GLYA…LAAA, TPVS…FLLI, IQLM…ICAL, LGLM…FLHI, CMHA…IHGL, SVCF…AGFF, NSWA…VRLL, VIAG…CLSL, LAAV…VNLL, IPEL…HKLI, and LIKM…GIMI.

It belongs to the complex I subunit 5 family.

The protein resides in the mitochondrion inner membrane. The catalysed reaction is a ubiquinone + NADH + 5 H(+)(in) = a ubiquinol + NAD(+) + 4 H(+)(out). Core subunit of the mitochondrial membrane respiratory chain NADH dehydrogenase (Complex I) that is believed to belong to the minimal assembly required for catalysis. Complex I functions in the transfer of electrons from NADH to the respiratory chain. The immediate electron acceptor for the enzyme is believed to be ubiquinone. The chain is NADH-ubiquinone oxidoreductase chain 5 (ND5) from Branchiostoma floridae (Florida lancelet).